The chain runs to 744 residues: Sorting nexin MVP1 (744 aa).

Disordered regions lie at residues 1 to 40 (MNSN…ATTT), 218 to 252 (NRSI…GGGG), and 273 to 299 (SRSV…GSGT). Polar residues-rich tracts occupy residues 26 to 40 (TSIN…ATTT) and 218 to 243 (NRSI…STTI). Positions 283-297 (QGGGGGSGGGSGSGS) are enriched in gly residues. Residues 326–444 (GIDLIKIKEV…SFLTVPTDLT (119 aa)) enclose the PX domain. A 1,2-diacyl-sn-glycero-3-phospho-(1D-myo-inositol-3-phosphate)-binding residues include arginine 369, serine 371, lysine 395, and arginine 410.

It belongs to the sorting nexin family.

The protein resides in the cytoplasm. It is found in the membrane. Required for vacuolar protein sorting. This chain is Sorting nexin MVP1 (MVP1), found in Candida albicans (strain SC5314 / ATCC MYA-2876) (Yeast).